We begin with the raw amino-acid sequence, 360 residues long: Phospho-N-acetylmuramoyl-pentapeptide-transferase (360 aa).

Transmembrane regions (helical) follow at residues 21 to 41, 73 to 93, 94 to 114, 132 to 152, 168 to 188, 199 to 219, 235 to 255, 263 to 283, 288 to 308, and 338 to 358; these read YITVRAILALLTALLVSLWIG, TMGGVMILFAITVSTLLWANL, ANPYVWFSLFVLLGYGAIGFV, WKYFWLSVIALVAAFGMYAIG, IMPQLGLFYIILTYFVIVGTS, GLAIMPTVLVAGAFALIAWAT, FSAELVVFCTAIVGAGLGFLW, VFMGDVGSLALGGALGVVAVL, FLLVIMGGVFVVETLSVILQV, and VIVRFWIISLMLVLVGLVTLK.

Belongs to the glycosyltransferase 4 family. MraY subfamily. Mg(2+) is required as a cofactor.

It localises to the cell inner membrane. It carries out the reaction UDP-N-acetyl-alpha-D-muramoyl-L-alanyl-gamma-D-glutamyl-meso-2,6-diaminopimeloyl-D-alanyl-D-alanine + di-trans,octa-cis-undecaprenyl phosphate = di-trans,octa-cis-undecaprenyl diphospho-N-acetyl-alpha-D-muramoyl-L-alanyl-D-glutamyl-meso-2,6-diaminopimeloyl-D-alanyl-D-alanine + UMP. The protein operates within cell wall biogenesis; peptidoglycan biosynthesis. Its function is as follows. Catalyzes the initial step of the lipid cycle reactions in the biosynthesis of the cell wall peptidoglycan: transfers peptidoglycan precursor phospho-MurNAc-pentapeptide from UDP-MurNAc-pentapeptide onto the lipid carrier undecaprenyl phosphate, yielding undecaprenyl-pyrophosphoryl-MurNAc-pentapeptide, known as lipid I. The chain is Phospho-N-acetylmuramoyl-pentapeptide-transferase from Pasteurella multocida (strain Pm70).